Reading from the N-terminus, the 105-residue chain is MKAFRLDELEAERAANDGAYLQFLRERNMSVGLYALDAGTTDSQKPHAQDEVYFVVSGRAAITVGMETTQVARGSVVYVPAGVAHKFHHISEDLRVLVVFSPPES.

In terms of domain architecture, Cupin type-2 spans 33 to 100 (LYALDAGTTD…SEDLRVLVVF (68 aa)).

This is an uncharacterized protein from Streptomyces coelicolor (strain ATCC BAA-471 / A3(2) / M145).